We begin with the raw amino-acid sequence, 111 residues long: Large ribosomal subunit protein uL22 (111 aa).

Belongs to the universal ribosomal protein uL22 family. As to quaternary structure, part of the 50S ribosomal subunit.

Its function is as follows. This protein binds specifically to 23S rRNA; its binding is stimulated by other ribosomal proteins, e.g. L4, L17, and L20. It is important during the early stages of 50S assembly. It makes multiple contacts with different domains of the 23S rRNA in the assembled 50S subunit and ribosome. In terms of biological role, the globular domain of the protein is located near the polypeptide exit tunnel on the outside of the subunit, while an extended beta-hairpin is found that lines the wall of the exit tunnel in the center of the 70S ribosome. The chain is Large ribosomal subunit protein uL22 from Alkalilimnicola ehrlichii (strain ATCC BAA-1101 / DSM 17681 / MLHE-1).